Reading from the N-terminus, the 49-residue chain is Large ribosomal subunit protein bL33 (49 aa).

The protein belongs to the bacterial ribosomal protein bL33 family.

This is Large ribosomal subunit protein bL33 from Moorella thermoacetica (strain ATCC 39073 / JCM 9320).